A 543-amino-acid chain; its full sequence is Carboxypeptidase Y homolog A (543 aa).

The signal sequence occupies residues 1–17; it reads MKFLTTGLLATAALAAA. A propeptide spanning residues 18–124 is cleaved from the precursor; sequence QEQQVLQAED…KLHNYDLRVK (107 aa). 5 disulfides stabilise this stretch: Cys-179–Cys-419, Cys-313–Cys-327, Cys-337–Cys-360, Cys-344–Cys-353, and Cys-382–Cys-389. A glycan (N-linked (GlcNAc...) asparagine) is linked at Asn-210. The active site involves Ser-266. Asp-458 is a catalytic residue. An N-linked (GlcNAc...) asparagine glycan is attached at Asn-509. His-520 is a catalytic residue.

This sequence belongs to the peptidase S10 family.

It is found in the vacuole. It catalyses the reaction Release of a C-terminal amino acid with broad specificity.. Functionally, vacuolar carboxypeptidase involved in degradation of small peptides. Digests preferentially peptides containing an aliphatic or hydrophobic residue in P1' position, as well as methionine, leucine or phenylalanine in P1 position of ester substrate. The polypeptide is Carboxypeptidase Y homolog A (CPYA) (Trichophyton equinum (Horse ringworm fungus)).